The chain runs to 451 residues: MVSFESSFERGTDFLNRNFKKCLFACISIFIFALLALSFLSLLQPDTVQRLYQCAVPSMIYVPPMINEAISIQHEEFNNRRRRLSAALREDKLDALIMEPTVSMDYFANITTGSWGLSERPFLGIIFSDDEPYPGDVASRIYFLVPKFELPRAKELVGKNIDAKYITWDEDENPYQVLYDRLGPLKLMIDGTVRNFIAQGLQYAGFTTFGVSPRVASLREIKSPAEVDIMSRVNIATVAAIRSVQPCIKPGITEKELAEVINMLFVYGGLPVQESPIVLFGERAAMPHGGPSNRRLKKSEFVLMDVGTTLFGYHSDCTRTVLPHGQKMTERMEKLWNLVYDAQTAGIQMLSHLSNTSCAEVDLAARKVIKDAGYGEYFIHRLGHGLGLEEHEQTYLNPANKGTPVQKGNVFTVEPGIYIPDEIGIRIEDAVLASDVPILLTNFRAKSPYEP.

Mn(2+)-binding residues include D305, D316, H384, E414, and E428.

The protein belongs to the peptidase M24B family. It depends on Mn(2+) as a cofactor.

This is an uncharacterized protein from Schizosaccharomyces pombe (strain 972 / ATCC 24843) (Fission yeast).